The following is a 119-amino-acid chain: uncharacterized protein (119 aa).

This is an uncharacterized protein from Orgyia pseudotsugata (Douglas-fir tussock moth).